The sequence spans 1135 residues: Envelopment polyprotein (1135 aa).

A signal peptide spans 1–18; that stretch reads MGIWKWLVMASLVWPVLT. Residues 19-485 are Lumenal-facing; the sequence is LRNVYDMKIE…VPGFHGWATA (467 aa). 11 cysteine pairs are disulfide-bonded: Cys29-Cys151, Cys63-Cys157, Cys109-Cys128, Cys133-Cys138, Cys175-Cys185, Cys210-Cys247, Cys234-Cys351, Cys376-Cys435, Cys380-Cys389, Cys405-Cys424, and Cys452-Cys475. N-linked (GlcNAc...) asparagine; by host glycosylation is present at Asn134. N-linked (GlcNAc...) asparagine; by host glycosylation is found at Asn235 and Asn347. N-linked (GlcNAc...) asparagine; by host glycosylation occurs at Asn399. Residues 486–506 form a helical membrane-spanning segment; it reads ALLVTFCFGWVLIPAITFIIL. The Cytoplasmic segment spans residues 507–627; it reads TILKFIANIF…LNLFRYKSRC (121 aa). The segment at 516 to 533 is binding to the ribonucleoprotein; it reads FHTSNQENRLKSVLRKIK. 2 CCHC-type zinc fingers span residues 545–565 and 570–591; these read CDVCKYECETYKELKAHGVSC and CPYCFTHCEPTEAAFQAHYKVC. Binding to the ribonucleoprotein regions lie at residues 588 to 605, 592 to 603, and 611 to 625; these read YKVCQVTHRFRDDLKKTV, QVTHRFRDDLKK, and TPGCYRTLNLFRYKS. The region spanning 611–634 is the ITAM domain; it reads TPGCYRTLNLFRYKSRCYIFTMWI. The YxxL signature appears at 615–618; the sequence is YRTL. A helical transmembrane segment spans residues 628 to 648; sequence YIFTMWIFLLVLESILWAASA. Residues 649–1105 are Lumenal-facing; it reads SETPLTPVWN…EWISGIFSGN (457 aa). 8 disulfide bridges follow: Cys735/Cys770, Cys739/Cys777, Cys751/Cys885, Cys765/Cys896, Cys780/Cys904, Cys806/Cys815, Cys823/Cys832, and Cys863/Cys867. A fusion loop region spans residues 757–777; it reads YQYETSWGCNPSDCPGVGTGC. N-linked (GlcNAc...) asparagine; by host glycosylation is present at Asn928. 5 disulfide bridges follow: Cys970–Cys1000, Cys993–Cys1045, Cys1010–Cys1015, Cys1046–Cys1051, and Cys1085–Cys1089. A helical membrane pass occupies residues 1106-1126; it reads WIVLIVLCVFLLFSLVLLSIL. The segment at 1122-1135 is binding to the ribonucleoprotein; it reads LLSILCPVRKHKKS. Over 1127-1135 the chain is Cytoplasmic; sequence CPVRKHKKS.

It belongs to the hantavirus envelope glycoprotein family. In terms of assembly, homodimer. Homotetramer; forms heterotetrameric Gn-Gc spikes in the pre-fusion conformation. Interacts (via C-terminus) with the nucleoprotein. Interacts with host TUFM; this interaction contributes to the virus-induced degradation of mitochondria by autophagy, which leads to degradation of host MAVS and inhibition of type I interferon (IFN) responses. Interacts with host MAP1LC3B; this interaction contributes to the virus-induced degradation of mitochondria by autophagy, which leads to degradation of host MAVS and inhibition of type I interferon (IFN) responses. As to quaternary structure, homodimer. Homotetramer; forms heterotetrameric Gn-Gc spikes in the pre-fusion conformation. Homotrimer; forms homotrimer in the post-fusion conformation at acidic pH. Interacts (via C-terminus) with the nucleoprotein. In terms of processing, envelope polyprotein precursor is quickly cleaved in vivo just after synthesis, presumably by host signal peptidase.

The protein resides in the virion membrane. It localises to the host cell surface. The protein localises to the host Golgi apparatus membrane. It is found in the host endoplasmic reticulum membrane. Its subcellular location is the host mitochondrion. Forms homotetramers with glycoprotein C at the surface of the virion. Attaches the virion to host cell receptors including integrin ITGAV/ITGB3. This attachment induces virion internalization predominantly through clathrin-dependent endocytosis. May also bind to host C1QBP for virus entry into the host cell. Mediates the assembly and budding of infectious virus particles through its interaction with the nucleocapsid protein and the viral genome. May dysregulate normal immune and endothelial cell responses through an ITAM motif. Translocates to mitochondria, binds to host TUFM and recruits MAP1LC3B. These interactions induce mitochondrial autophagy and therefore destruction of host MAVS leading to inhibition of type I interferon (IFN) responses. Concomitant breakdown of glycoprotein N is apparently prevented by the nucleoprotein that may inhibit Gn-stimulated autophagosome-lysosome fusion. Interacts with the viral genomic RNA. Functionally, forms homotetramers with glycoprotein N at the surface of the virion. Attaches the virion to host cell receptors including integrin ITGAV/ITGB3. This attachment induces virion internalization predominantly through clathrin-dependent endocytosis. May also bind to host C1QBP for virus entry into the host cell. Class II fusion protein that promotes fusion of viral membrane with host endosomal membrane after endocytosis of the virion. This is Envelopment polyprotein (GP) from Hantaan virus (strain Lee) (Lee virus).